We begin with the raw amino-acid sequence, 351 residues long: MNLRGVFQDFNPSKFLIYACLLLFSVLLSLRLDGIIQWSYWAVFAPIWLWKLMVIIGASVGTGVWAHNPQYRAEGETCVEFKAMLIAVGIHLLLLTFEVLVCERVERASIPYWLLVFMPLFFVSPVSVAACVWGFRHDRSLELEILCSVNILQFIFIALKLDGIISWPWLVVCVPLWILMSFLCLVVLYYIVWSVLFLRSMDVIAEQRRTHITMAISWMTIVVPLLTFEILLVHKLDNHYSPNYVPVFVPLWVSLVTLMVTTFGQKGGNHWWFGIRKDFCQFLLELFPFLREYGNISYDLHHEDSDMSEELPIHEVPKIPTMFRKKTGVVITQSPGKYFVPPPKLCIDMPD.

Helical transmembrane passes span 16–36 (LIYACLLLFSVLLSLRLDGII), 41–61 (WAVFAPIWLWKLMVIIGASVG), 81–101 (FKAMLIAVGIHLLLLTFEVLV), 113–133 (WLLVFMPLFFVSPVSVAACVW), 154–174 (FIFIALKLDGIISWPWLVVCV), 178–198 (ILMSFLCLVVLYYIVWSVLFL), 212–232 (ITMAISWMTIVVPLLTFEILL), and 244–264 (YVPVFVPLWVSLVTLMVTTFG).

The protein belongs to the TMEM185 family.

The protein resides in the membrane. This is Transmembrane protein 185-like from Danio rerio (Zebrafish).